Reading from the N-terminus, the 301-residue chain is Probable 5-dehydro-4-deoxyglucarate dehydratase (301 aa).

The protein belongs to the DapA family.

The catalysed reaction is 5-dehydro-4-deoxy-D-glucarate + H(+) = 2,5-dioxopentanoate + CO2 + H2O. The protein operates within carbohydrate acid metabolism; D-glucarate degradation; 2,5-dioxopentanoate from D-glucarate: step 2/2. The chain is Probable 5-dehydro-4-deoxyglucarate dehydratase from Xanthobacter autotrophicus (strain ATCC BAA-1158 / Py2).